The primary structure comprises 85 residues: Serine protease inhibitor Kazal-type 7 (85 aa).

The first 19 residues, 1 to 19 (MKITGGLLLLCTVVYFCSS), serve as a signal peptide directing secretion. In terms of domain architecture, Kazal-like spans 26–85 (SPKKVDCSIYKKYPVVAIPCPITYLPVCGSDYITYGNECHLCTESLKSNGRVQFLHDGSC). Disulfide bonds link C32–C67, C45–C64, and C53–C85.

Its subcellular location is the secreted. Probable serine protease inhibitor. This is Serine protease inhibitor Kazal-type 7 (SPINK7) from Homo sapiens (Human).